Consider the following 77-residue polypeptide: Large ribosomal subunit protein bL28 (77 aa).

Belongs to the bacterial ribosomal protein bL28 family.

The protein is Large ribosomal subunit protein bL28 of Dechloromonas aromatica (strain RCB).